The primary structure comprises 591 residues: DDB1- and CUL4-associated factor 8 (591 aa).

The segment covering 1–25 (MSNKRPNTTDGRTDLANGSLSSSPE) has biased composition (polar residues). Positions 1–140 (MSNKRPNTTD…EDWVSSETTA (140 aa)) are disordered. 2 positions are modified to phosphoserine: S22 and S23. Residues 40-51 (IEVEASDLSLSL) carry the Nuclear export signal motif. Composition is skewed to basic and acidic residues over residues 66-100 (RGTD…HGHS) and 118-131 (SRDQ…RALE). Residues S100, S123, and S124 each carry the phosphoserine modification. WD repeat units lie at residues 185-224 (GHTG…PVLD), 228-269 (GHKS…CCKN), 275-315 (QHKG…PASK), 323-363 (EKKV…ENEN), 379-418 (ESKA…GAQY), 426-466 (RNNA…IIQF), and 470-509 (DKGG…STEL). R198 is modified (omega-N-methylarginine; by PRMT1). The tract at residues 552 to 591 (HRRWREPGVGATDADSDESPSSSDTSDEEEGPDRVQCMPS) is disordered.

It belongs to the WD repeat DCAF8 family. In terms of assembly, interacts with DDB1, CUL4A and CUL4B. Interacts with KPNA1, KPNB1 and XPO1. Expressed in the brain.

The protein localises to the nucleus. Its subcellular location is the cytoplasm. Its pathway is protein modification; protein ubiquitination. In terms of biological role, may function as a substrate receptor for CUL4-DDB1 E3 ubiquitin-protein ligase complex. The sequence is that of DDB1- and CUL4-associated factor 8 (Dcaf8) from Mus musculus (Mouse).